The following is a 254-amino-acid chain: Imidazole glycerol phosphate synthase subunit HisF (254 aa).

Active-site residues include Asp-12 and Asp-131.

Belongs to the HisA/HisF family. In terms of assembly, heterodimer of HisH and HisF.

The protein resides in the cytoplasm. It carries out the reaction 5-[(5-phospho-1-deoxy-D-ribulos-1-ylimino)methylamino]-1-(5-phospho-beta-D-ribosyl)imidazole-4-carboxamide + L-glutamine = D-erythro-1-(imidazol-4-yl)glycerol 3-phosphate + 5-amino-1-(5-phospho-beta-D-ribosyl)imidazole-4-carboxamide + L-glutamate + H(+). It functions in the pathway amino-acid biosynthesis; L-histidine biosynthesis; L-histidine from 5-phospho-alpha-D-ribose 1-diphosphate: step 5/9. Functionally, IGPS catalyzes the conversion of PRFAR and glutamine to IGP, AICAR and glutamate. The HisF subunit catalyzes the cyclization activity that produces IGP and AICAR from PRFAR using the ammonia provided by the HisH subunit. The chain is Imidazole glycerol phosphate synthase subunit HisF from Janthinobacterium sp. (strain Marseille) (Minibacterium massiliensis).